Consider the following 237-residue polypeptide: D-aminoacyl-tRNA deacylase (237 aa).

This sequence belongs to the DtdA deacylase family. In terms of assembly, monomer. Zn(2+) is required as a cofactor.

The catalysed reaction is a D-aminoacyl-tRNA + H2O = a tRNA + a D-alpha-amino acid + H(+). The enzyme catalyses glycyl-tRNA(Ala) + H2O = tRNA(Ala) + glycine + H(+). D-aminoacyl-tRNA deacylase with broad substrate specificity. By recycling D-aminoacyl-tRNA to D-amino acids and free tRNA molecules, this enzyme counteracts the toxicity associated with the formation of D-aminoacyl-tRNA entities in vivo. This is D-aminoacyl-tRNA deacylase from Saccharolobus islandicus (strain Y.N.15.51 / Yellowstone #2) (Sulfolobus islandicus).